The chain runs to 286 residues: Undecaprenyl-diphosphatase (286 aa).

The next 7 helical transmembrane spans lie at Trp5–Val25, Ile55–Trp75, Ser92–Leu112, Leu122–Ala142, Ile185–Leu205, Met229–Val249, and Phe264–Ile284.

Belongs to the UppP family.

The protein resides in the cell membrane. It carries out the reaction di-trans,octa-cis-undecaprenyl diphosphate + H2O = di-trans,octa-cis-undecaprenyl phosphate + phosphate + H(+). In terms of biological role, catalyzes the dephosphorylation of undecaprenyl diphosphate (UPP). Confers resistance to bacitracin. The protein is Undecaprenyl-diphosphatase of Clostridium novyi (strain NT).